Consider the following 146-residue polypeptide: Large ribosomal subunit protein uL13 (146 aa).

Belongs to the universal ribosomal protein uL13 family. In terms of assembly, part of the 50S ribosomal subunit.

This protein is one of the early assembly proteins of the 50S ribosomal subunit, although it is not seen to bind rRNA by itself. It is important during the early stages of 50S assembly. The polypeptide is Large ribosomal subunit protein uL13 (Mycoplasma pneumoniae (strain ATCC 29342 / M129 / Subtype 1) (Mycoplasmoides pneumoniae)).